Consider the following 242-residue polypeptide: Ribonuclease 3 (242 aa).

Residues 14–142 form the RNase III domain; it reads LRRFAARFAL…VIGALYLSTG (129 aa). Glu56 provides a ligand contact to Mg(2+). The active site involves Asp60. Asp128 and Glu131 together coordinate Mg(2+). The active site involves Glu131. Residues 170 to 235 enclose the DRBM domain; that stretch reads NHKSALQELT…ARGAYAALRS (66 aa).

This sequence belongs to the ribonuclease III family. Homodimer. Mg(2+) serves as cofactor.

Its subcellular location is the cytoplasm. The enzyme catalyses Endonucleolytic cleavage to 5'-phosphomonoester.. Its function is as follows. Digests double-stranded RNA. Involved in the processing of primary rRNA transcript to yield the immediate precursors to the large and small rRNAs (23S and 16S). Processes some mRNAs, and tRNAs when they are encoded in the rRNA operon. Processes pre-crRNA and tracrRNA of type II CRISPR loci if present in the organism. The chain is Ribonuclease 3 from Gloeobacter violaceus (strain ATCC 29082 / PCC 7421).